The primary structure comprises 499 residues: Trichothecene C-4 hydroxylase (499 aa).

A helical membrane pass occupies residues 7-29; sequence VGVAVQLVLTVLLASIPLRVIWN. Residues asparagine 173 and asparagine 287 are each glycosylated (N-linked (GlcNAc...) asparagine). A heme-binding site is contributed by cysteine 442. Residue asparagine 473 is glycosylated (N-linked (GlcNAc...) asparagine).

Belongs to the cytochrome P450 family. Heme is required as a cofactor.

The protein resides in the membrane. Its pathway is sesquiterpene biosynthesis; trichothecene biosynthesis. Trichothecene C-4 hydroxylase; part of the gene cluster that mediates the production of the antimicrobial trichothecene harzianum A (HA) that plays a role in Botrytis cinerea antagonistic activity and plant defense priming. The biosynthesis of harzianum A begins with the cyclization of farnesyl diphosphate to trichodiene and is catalyzed by the trichodiene synthase TRI5. Trichodiene undergoes a series of oxygenations catalyzed by the cytochrome P450 monooxygenase TRI4. TRI4 controls the addition of 3 oxygens at C-2, C-11, and the C-12, C-13-epoxide to form the intermediate isotrichodiol. Isotrichodiol then undergoes a non-enzymatic isomerization and cyclization to form 12,13-epoxytrichothec-9-ene (EPT) which is further converted to trichodermol by the cytochrome P450 monooxygenase TRI11 via C-4 hydroxylation. The last step of HA synthesis is esterification of an octatriendioyl moiety to the C-4 oxygen of trichodermol. The octatriendioyl moiety is probably produced by the polyketide synthase TRI17 and the esterification performed by the trichothecene O-acetyltransferase TRI3. The chain is Trichothecene C-4 hydroxylase from Trichoderma arundinaceum.